Reading from the N-terminus, the 233-residue chain is Large ribosomal subunit protein uL1 (233 aa).

Belongs to the universal ribosomal protein uL1 family. In terms of assembly, part of the 50S ribosomal subunit.

In terms of biological role, binds directly to 23S rRNA. The L1 stalk is quite mobile in the ribosome, and is involved in E site tRNA release. Protein L1 is also a translational repressor protein, it controls the translation of the L11 operon by binding to its mRNA. This chain is Large ribosomal subunit protein uL1, found in Photobacterium profundum (strain SS9).